Here is a 201-residue protein sequence, read N- to C-terminus: Peptidyl-tRNA hydrolase (201 aa).

Residue Tyr17 participates in tRNA binding. The Proton acceptor role is filled by His22. Residues Phe76, Asn78, and Asn124 each contribute to the tRNA site.

It belongs to the PTH family. As to quaternary structure, monomer.

Its subcellular location is the cytoplasm. The enzyme catalyses an N-acyl-L-alpha-aminoacyl-tRNA + H2O = an N-acyl-L-amino acid + a tRNA + H(+). Functionally, hydrolyzes ribosome-free peptidyl-tRNAs (with 1 or more amino acids incorporated), which drop off the ribosome during protein synthesis, or as a result of ribosome stalling. In terms of biological role, catalyzes the release of premature peptidyl moieties from peptidyl-tRNA molecules trapped in stalled 50S ribosomal subunits, and thus maintains levels of free tRNAs and 50S ribosomes. The polypeptide is Peptidyl-tRNA hydrolase (Oleidesulfovibrio alaskensis (strain ATCC BAA-1058 / DSM 17464 / G20) (Desulfovibrio alaskensis)).